The following is a 131-amino-acid chain: Protein SOB FIVE-LIKE 4 (131 aa).

2 disordered regions span residues 1 to 21 (MDKE…SSPI) and 40 to 131 (IYNY…YRMK). Residues 8–18 (SSESGWTTYLS) show a composition bias toward polar residues. Residues 11–16 (SGWTTY) carry the SOFL-A motif. The segment covering 46 to 58 (KVEHEEERNKDSD) has biased composition (basic and acidic residues). The SOFL-B motif lies at 60–69 (SMASDASSGP). The segment covering 79–109 (KALDLKNGKNEGNSKSKNDDDHHNHYHDGKK) has biased composition (basic and acidic residues). Residues 107-114 (GKKTSNSY) carry the Nuclear localization signal motif. A compositionally biased stretch (basic residues) spans 114 to 131 (YRKKDKKKRENKSTYRMK).

The protein belongs to the SOFL plant protein family. Expressed, at low levels, in seedlings, roots, flowers and siliques.

It localises to the cytoplasm. The protein resides in the nucleus. Involved in cytokinin-mediated development. The chain is Protein SOB FIVE-LIKE 4 from Arabidopsis thaliana (Mouse-ear cress).